The primary structure comprises 739 residues: Phosphoribosylformylglycinamidine synthase subunit PurL (739 aa).

Histidine 54 is an active-site residue. Tyrosine 57 and lysine 96 together coordinate ATP. Residue glutamate 98 participates in Mg(2+) binding. Substrate contacts are provided by residues 99 to 102 and arginine 121; that span reads SHNH. Histidine 100 serves as the catalytic Proton acceptor. Aspartate 122 contacts Mg(2+). Glutamine 245 provides a ligand contact to substrate. Aspartate 273 contributes to the Mg(2+) binding site. 317-319 contributes to the substrate binding site; the sequence is ESQ. Residues aspartate 500 and glycine 537 each contribute to the ATP site. Mg(2+) is bound at residue asparagine 538. Serine 540 is a substrate binding site.

Belongs to the FGAMS family. As to quaternary structure, monomer. Part of the FGAM synthase complex composed of 1 PurL, 1 PurQ and 2 PurS subunits.

The protein resides in the cytoplasm. It catalyses the reaction N(2)-formyl-N(1)-(5-phospho-beta-D-ribosyl)glycinamide + L-glutamine + ATP + H2O = 2-formamido-N(1)-(5-O-phospho-beta-D-ribosyl)acetamidine + L-glutamate + ADP + phosphate + H(+). It participates in purine metabolism; IMP biosynthesis via de novo pathway; 5-amino-1-(5-phospho-D-ribosyl)imidazole from N(2)-formyl-N(1)-(5-phospho-D-ribosyl)glycinamide: step 1/2. Part of the phosphoribosylformylglycinamidine synthase complex involved in the purines biosynthetic pathway. Catalyzes the ATP-dependent conversion of formylglycinamide ribonucleotide (FGAR) and glutamine to yield formylglycinamidine ribonucleotide (FGAM) and glutamate. The FGAM synthase complex is composed of three subunits. PurQ produces an ammonia molecule by converting glutamine to glutamate. PurL transfers the ammonia molecule to FGAR to form FGAM in an ATP-dependent manner. PurS interacts with PurQ and PurL and is thought to assist in the transfer of the ammonia molecule from PurQ to PurL. This Bacillus cytotoxicus (strain DSM 22905 / CIP 110041 / 391-98 / NVH 391-98) protein is Phosphoribosylformylglycinamidine synthase subunit PurL.